The chain runs to 413 residues: 1-deoxy-D-xylulose 5-phosphate reductoisomerase (413 aa).

Residues threonine 13, glycine 14, serine 15, isoleucine 16, arginine 40, asparagine 41, and asparagine 127 each contribute to the NADPH site. 1-deoxy-D-xylulose 5-phosphate is bound at residue lysine 128. Position 129 (glutamate 129) interacts with NADPH. Aspartate 153 serves as a coordination point for Mn(2+). Serine 154, glutamate 155, serine 184, and histidine 207 together coordinate 1-deoxy-D-xylulose 5-phosphate. Glutamate 155 lines the Mn(2+) pocket. Glycine 213 is a binding site for NADPH. Residues serine 220, asparagine 225, lysine 226, and glutamate 229 each coordinate 1-deoxy-D-xylulose 5-phosphate. Mn(2+) is bound at residue glutamate 229.

It belongs to the DXR family. Mg(2+) is required as a cofactor. The cofactor is Mn(2+).

The catalysed reaction is 2-C-methyl-D-erythritol 4-phosphate + NADP(+) = 1-deoxy-D-xylulose 5-phosphate + NADPH + H(+). Its pathway is isoprenoid biosynthesis; isopentenyl diphosphate biosynthesis via DXP pathway; isopentenyl diphosphate from 1-deoxy-D-xylulose 5-phosphate: step 1/6. Its function is as follows. Catalyzes the NADPH-dependent rearrangement and reduction of 1-deoxy-D-xylulose-5-phosphate (DXP) to 2-C-methyl-D-erythritol 4-phosphate (MEP). The chain is 1-deoxy-D-xylulose 5-phosphate reductoisomerase from Nitrosomonas europaea (strain ATCC 19718 / CIP 103999 / KCTC 2705 / NBRC 14298).